Here is a 93-residue protein sequence, read N- to C-terminus: U11-ctenitoxin-Pn1a (93 aa).

A signal peptide spans 1–21 (MKCAVLFLSVIALVHIFVVEA). Positions 22–34 (EEEPDSDALVPQE) are excised as a propeptide. Intrachain disulfides connect C37–C51, C44–C57, C50–C75, C59–C73, and C83–C90.

This sequence belongs to the neurotoxin 09 (Tx3-6) family. As to expression, expressed by the venom gland.

Its subcellular location is the secreted. Functionally, probable neurotoxin. In Phoneutria nigriventer (Brazilian armed spider), this protein is U11-ctenitoxin-Pn1a.